Here is an 885-residue protein sequence, read N- to C-terminus: DNA mismatch repair protein MutS (885 aa).

A disordered region spans residues 1-67 (MAPGEQQLSL…SNNDDEGLPR (67 aa)). A compositionally biased stretch (basic and acidic residues) spans 26–36 (SEDKTEESERP). ATP is bound at residue 691–698 (GPNASGKS).

The protein belongs to the DNA mismatch repair MutS family.

Functionally, this protein is involved in the repair of mismatches in DNA. It is possible that it carries out the mismatch recognition step. This protein has a weak ATPase activity. The protein is DNA mismatch repair protein MutS of Synechococcus sp. (strain RCC307).